A 291-amino-acid polypeptide reads, in one-letter code: Formamidopyrimidine-DNA glycosylase (291 aa).

Catalysis depends on Pro2, which acts as the Schiff-base intermediate with DNA. Glu3 functions as the Proton donor in the catalytic mechanism. The active-site Proton donor; for beta-elimination activity is Lys60. Residues His108 and Arg127 each coordinate DNA. The segment at Trp257–Arg291 adopts an FPG-type zinc-finger fold. Arg281 (proton donor; for delta-elimination activity) is an active-site residue.

The protein belongs to the FPG family. In terms of assembly, monomer. Zn(2+) serves as cofactor.

It catalyses the reaction Hydrolysis of DNA containing ring-opened 7-methylguanine residues, releasing 2,6-diamino-4-hydroxy-5-(N-methyl)formamidopyrimidine.. The enzyme catalyses 2'-deoxyribonucleotide-(2'-deoxyribose 5'-phosphate)-2'-deoxyribonucleotide-DNA = a 3'-end 2'-deoxyribonucleotide-(2,3-dehydro-2,3-deoxyribose 5'-phosphate)-DNA + a 5'-end 5'-phospho-2'-deoxyribonucleoside-DNA + H(+). Functionally, involved in base excision repair of DNA damaged by oxidation or by mutagenic agents. Acts as a DNA glycosylase that recognizes and removes damaged bases. Has a preference for oxidized purines, such as 7,8-dihydro-8-oxoguanine (8-oxoG). Has AP (apurinic/apyrimidinic) lyase activity and introduces nicks in the DNA strand. Cleaves the DNA backbone by beta-delta elimination to generate a single-strand break at the site of the removed base with both 3'- and 5'-phosphates. The polypeptide is Formamidopyrimidine-DNA glycosylase (Prochlorococcus marinus (strain MIT 9313)).